Reading from the N-terminus, the 271-residue chain is Dermonecrotic toxin LhSicTox-alphaIA2aiv (271 aa).

His-3 is an active-site residue. Residues Glu-23 and Asp-25 each contribute to the Mg(2+) site. The active-site Nucleophile is His-39. Cystine bridges form between Cys-43–Cys-49 and Cys-45–Cys-188. Residue Asp-83 coordinates Mg(2+).

The protein belongs to the arthropod phospholipase D family. Class II subfamily. The cofactor is Mg(2+). Expressed by the venom gland.

The protein localises to the secreted. It carries out the reaction an N-(acyl)-sphingosylphosphocholine = an N-(acyl)-sphingosyl-1,3-cyclic phosphate + choline. The catalysed reaction is an N-(acyl)-sphingosylphosphoethanolamine = an N-(acyl)-sphingosyl-1,3-cyclic phosphate + ethanolamine. It catalyses the reaction a 1-acyl-sn-glycero-3-phosphocholine = a 1-acyl-sn-glycero-2,3-cyclic phosphate + choline. The enzyme catalyses a 1-acyl-sn-glycero-3-phosphoethanolamine = a 1-acyl-sn-glycero-2,3-cyclic phosphate + ethanolamine. Functionally, dermonecrotic toxins cleave the phosphodiester linkage between the phosphate and headgroup of certain phospholipids (sphingolipid and lysolipid substrates), forming an alcohol (often choline) and a cyclic phosphate. This toxin acts on sphingomyelin (SM). It may also act on ceramide phosphoethanolamine (CPE), lysophosphatidylcholine (LPC) and lysophosphatidylethanolamine (LPE), but not on lysophosphatidylserine (LPS), and lysophosphatidylglycerol (LPG). It acts by transphosphatidylation, releasing exclusively cyclic phosphate products as second products. Induces dermonecrosis, hemolysis, increased vascular permeability, edema, inflammatory response, and platelet aggregation. The polypeptide is Dermonecrotic toxin LhSicTox-alphaIA2aiv (Loxosceles hirsuta (Recluse spider)).